The following is a 333-amino-acid chain: Cathepsin M (333 aa).

The signal sequence occupies residues 1–15; sequence MTSAIFLAMLCLGMA. The propeptide at 16–113 is activation peptide; it reads LPSPAPDPIL…KSVQKRLSVN (98 aa). Cystine bridges form between cysteine 135/cysteine 178 and cysteine 169/cysteine 211. Residue cysteine 138 is part of the active site. Residues asparagine 217, asparagine 221, and asparagine 268 are each glycosylated (N-linked (GlcNAc...) asparagine). Cysteine 269 and cysteine 322 form a disulfide bridge. Catalysis depends on residues histidine 276 and asparagine 300.

Belongs to the peptidase C1 family. Placenta.

It localises to the lysosome. In Mus musculus (Mouse), this protein is Cathepsin M (Ctsm).